The chain runs to 274 residues: tRNA-cytidine(32) 2-sulfurtransferase (274 aa).

A PP-loop motif motif is present at residues 40–45 (SGGKDS). [4Fe-4S] cluster-binding residues include C115, C118, and C206.

Belongs to the TtcA family. Homodimer. Mg(2+) serves as cofactor. It depends on [4Fe-4S] cluster as a cofactor.

Its subcellular location is the cytoplasm. The catalysed reaction is cytidine(32) in tRNA + S-sulfanyl-L-cysteinyl-[cysteine desulfurase] + AH2 + ATP = 2-thiocytidine(32) in tRNA + L-cysteinyl-[cysteine desulfurase] + A + AMP + diphosphate + H(+). It participates in tRNA modification. Its function is as follows. Catalyzes the ATP-dependent 2-thiolation of cytidine in position 32 of tRNA, to form 2-thiocytidine (s(2)C32). The sulfur atoms are provided by the cysteine/cysteine desulfurase (IscS) system. The chain is tRNA-cytidine(32) 2-sulfurtransferase from Pseudomonas putida (strain GB-1).